The primary structure comprises 452 residues: Histone acetyltransferase type B subunit 2 (452 aa).

WD repeat units lie at residues 155–195 (YEDG…NSKE), 205–245 (HHTK…SDGS), 256–296 (HHDA…NKAA), 300–340 (KESR…TPIS), 344–384 (SHCD…DDLS), and 401–441 (GHSS…SNDE).

The protein belongs to the WD repeat RBAP46/RBAP48/MSI1 family. Component of the HAT-B complex composed of at least HAT1 and HAT2. The HAT-B complex binds to histone H4 tail.

The protein localises to the cytoplasm. It is found in the nucleus. Regulatory subunit of the histone acetylase B (HAT-B) complex. The complex acetylates 'Lys-12' of histone H4 which is required for telomeric silencing. In Yarrowia lipolytica (strain CLIB 122 / E 150) (Yeast), this protein is Histone acetyltransferase type B subunit 2 (HAT2).